A 446-amino-acid polypeptide reads, in one-letter code: Glutamate--tRNA ligase (446 aa).

The short motif at 9-19 (PSPTGLLHVGN) is the 'HIGH' region element. The 'KMSKS' region motif lies at 240-244 (GLSKR). Residue Lys243 coordinates ATP.

This sequence belongs to the class-I aminoacyl-tRNA synthetase family. Glutamate--tRNA ligase type 1 subfamily. In terms of assembly, monomer.

The protein localises to the cytoplasm. The catalysed reaction is tRNA(Glu) + L-glutamate + ATP = L-glutamyl-tRNA(Glu) + AMP + diphosphate. Its function is as follows. Catalyzes the attachment of glutamate to tRNA(Glu) in a two-step reaction: glutamate is first activated by ATP to form Glu-AMP and then transferred to the acceptor end of tRNA(Glu). The chain is Glutamate--tRNA ligase from Azospirillum brasilense.